The primary structure comprises 386 residues: Probable protein phosphatase 2C 36 (386 aa).

A PPM-type phosphatase domain is found at 60–363 (ELSVAVVQGN…DDITVIVLFI (304 aa)). Mn(2+) is bound by residues Asp94, Gly95, Asp295, and Asp354.

Belongs to the PP2C family. Requires Mg(2+) as cofactor. Mn(2+) is required as a cofactor.

It carries out the reaction O-phospho-L-seryl-[protein] + H2O = L-seryl-[protein] + phosphate. It catalyses the reaction O-phospho-L-threonyl-[protein] + H2O = L-threonyl-[protein] + phosphate. In Oryza sativa subsp. japonica (Rice), this protein is Probable protein phosphatase 2C 36.